We begin with the raw amino-acid sequence, 541 residues long: MESYRGLWLKGAIVMALNMYEAGLTPVEIGLGERDFYIDVQSDSALSLQESEKFAQWKDHKYEIKDGKVTYNGKQILLQGDVTPSGEPRYFKVLNISVHHPSANVQLVRIRGIAFETKEQMDDYLQWLEKASETDHRIIGERMDLFSFHEESGPGLVLFHPKGQLIRNEMINYMREINASMGYQEVYTSHVFRTVLWKISGHYDTYRDKMLIFQKDDDELGIKPMNCPAHILIYKSRVRSYRDLPIRFSEFGNVYRWEKKGELYGLLRTRGFTQDDGHIFLREDQLKDEVKNLVRKTLDVLGKFGFKGEDVRINLSTRPDESIGSDEQWEKATKALLDVLKELNVPYVVKEKEGAFYGPKIDFDIRDSLNRWWQLSTIQVDFNLPERFKLEYVDEDGSKKRPVMVHRAIYGSLDRMIAILLEHFRGKLPTWLSPVQVRVLPISEDNLDYAKRVMDVLVQRGIRTEIDPSGETLSKRIKRGYDDGVPYLVIVGRKEASEEKVTIRARGNVEIKGVPLSRFVDELSLEIGNRDAENTLIKRIG.

The interval 135-429 is catalytic; it reads DHRIIGERMD…LLEHFRGKLP (295 aa). Residues Cys227, His278, and His406 each coordinate Zn(2+).

This sequence belongs to the class-II aminoacyl-tRNA synthetase family. As to quaternary structure, homodimer. Probably interacts with its editing subunit. The cofactor is Zn(2+).

The protein localises to the cytoplasm. The catalysed reaction is tRNA(Thr) + L-threonine + ATP = L-threonyl-tRNA(Thr) + AMP + diphosphate + H(+). Catalyzes the attachment of threonine to tRNA(Thr) in a two-step reaction: L-threonine is first activated by ATP to form Thr-AMP and then transferred to the acceptor end of tRNA(Thr). Also activates L-serine and transfers it to tRNA(Thr) but cannot deacylate incorrectly charged amino acid; unlike most archaea the editing function is found in a freestanding protein. The protein is Threonine--tRNA ligase catalytic subunit of Metallosphaera sedula (strain ATCC 51363 / DSM 5348 / JCM 9185 / NBRC 15509 / TH2).